Consider the following 185-residue polypeptide: Ribosome-recycling factor (185 aa).

This sequence belongs to the RRF family.

The protein localises to the cytoplasm. In terms of biological role, responsible for the release of ribosomes from messenger RNA at the termination of protein biosynthesis. May increase the efficiency of translation by recycling ribosomes from one round of translation to another. In Ehrlichia chaffeensis (strain ATCC CRL-10679 / Arkansas), this protein is Ribosome-recycling factor.